Reading from the N-terminus, the 464-residue chain is Soluble pyridine nucleotide transhydrogenase (464 aa).

Position 35-44 (35-44) interacts with FAD; sequence DSRRVVGGNC.

The protein belongs to the class-I pyridine nucleotide-disulfide oxidoreductase family. It depends on FAD as a cofactor.

The protein resides in the cytoplasm. It carries out the reaction NAD(+) + NADPH = NADH + NADP(+). Its function is as follows. Conversion of NADPH, generated by peripheral catabolic pathways, to NADH, which can enter the respiratory chain for energy generation. In Pseudomonas paraeruginosa (strain DSM 24068 / PA7) (Pseudomonas aeruginosa (strain PA7)), this protein is Soluble pyridine nucleotide transhydrogenase.